The primary structure comprises 344 residues: NADH-quinone oxidoreductase subunit H 2 (344 aa).

A run of 8 helical transmembrane segments spans residues 13–33 (LPIL…VAWL), 82–102 (ILFL…WAVI), 116–136 (ALLY…LAGW), 161–181 (MGFA…GEIV), 188–208 (FWHW…ISGV), 240–260 (LFFL…ALMF), 280–300 (VPGI…YLWF), and 319–339 (VFIP…VAQL).

The protein belongs to the complex I subunit 1 family. NDH-1 is composed of 14 different subunits. Subunits NuoA, H, J, K, L, M, N constitute the membrane sector of the complex.

It is found in the cell inner membrane. The catalysed reaction is a quinone + NADH + 5 H(+)(in) = a quinol + NAD(+) + 4 H(+)(out). In terms of biological role, NDH-1 shuttles electrons from NADH, via FMN and iron-sulfur (Fe-S) centers, to quinones in the respiratory chain. The immediate electron acceptor for the enzyme in this species is believed to be ubiquinone. Couples the redox reaction to proton translocation (for every two electrons transferred, four hydrogen ions are translocated across the cytoplasmic membrane), and thus conserves the redox energy in a proton gradient. This subunit may bind ubiquinone. The protein is NADH-quinone oxidoreductase subunit H 2 of Nitrosococcus oceani (strain ATCC 19707 / BCRC 17464 / JCM 30415 / NCIMB 11848 / C-107).